The primary structure comprises 140 residues: Nucleoside diphosphate kinase (140 aa).

The ATP site is built by Lys-9, Phe-57, Arg-85, Thr-91, Arg-102, and Asn-112. Catalysis depends on His-115, which acts as the Pros-phosphohistidine intermediate.

This sequence belongs to the NDK family. Homotetramer. Requires Mg(2+) as cofactor.

The protein localises to the cytoplasm. The enzyme catalyses a 2'-deoxyribonucleoside 5'-diphosphate + ATP = a 2'-deoxyribonucleoside 5'-triphosphate + ADP. It carries out the reaction a ribonucleoside 5'-diphosphate + ATP = a ribonucleoside 5'-triphosphate + ADP. Functionally, major role in the synthesis of nucleoside triphosphates other than ATP. The ATP gamma phosphate is transferred to the NDP beta phosphate via a ping-pong mechanism, using a phosphorylated active-site intermediate. This Chlorobium chlorochromatii (strain CaD3) protein is Nucleoside diphosphate kinase.